We begin with the raw amino-acid sequence, 334 residues long: Phosphate acyltransferase (334 aa).

This sequence belongs to the PlsX family. As to quaternary structure, homodimer. Probably interacts with PlsY.

The protein localises to the cytoplasm. It carries out the reaction a fatty acyl-[ACP] + phosphate = an acyl phosphate + holo-[ACP]. The protein operates within lipid metabolism; phospholipid metabolism. Functionally, catalyzes the reversible formation of acyl-phosphate (acyl-PO(4)) from acyl-[acyl-carrier-protein] (acyl-ACP). This enzyme utilizes acyl-ACP as fatty acyl donor, but not acyl-CoA. The protein is Phosphate acyltransferase of Caldicellulosiruptor saccharolyticus (strain ATCC 43494 / DSM 8903 / Tp8T 6331).